Reading from the N-terminus, the 99-residue chain is Small ribosomal subunit protein uS19 (99 aa).

Belongs to the universal ribosomal protein uS19 family.

Protein S19 forms a complex with S13 that binds strongly to the 16S ribosomal RNA. The polypeptide is Small ribosomal subunit protein uS19 (Sulfurihydrogenibium sp. (strain YO3AOP1)).